Reading from the N-terminus, the 459-residue chain is Putrescine aminotransferase (459 aa).

Pyridoxal 5'-phosphate is bound by residues Gly-150–Thr-151 and Gln-274. Lys-300 carries the N6-(pyridoxal phosphate)lysine modification. Pyridoxal 5'-phosphate is bound at residue Thr-332.

Belongs to the class-III pyridoxal-phosphate-dependent aminotransferase family. Putrescine aminotransferase subfamily. Pyridoxal 5'-phosphate serves as cofactor.

It carries out the reaction an alkane-alpha,omega-diamine + 2-oxoglutarate = an omega-aminoaldehyde + L-glutamate. The catalysed reaction is putrescine + 2-oxoglutarate = 1-pyrroline + L-glutamate + H2O. It catalyses the reaction cadaverine + 2-oxoglutarate = 5-aminopentanal + L-glutamate. It participates in amine and polyamine degradation; putrescine degradation; 4-aminobutanal from putrescine (transaminase route): step 1/1. In terms of biological role, catalyzes the aminotransferase reaction from putrescine to 2-oxoglutarate, leading to glutamate and 4-aminobutanal, which spontaneously cyclizes to form 1-pyrroline. This is the first step in one of two pathways for putrescine degradation, where putrescine is converted into 4-aminobutanoate (gamma-aminobutyrate or GABA) via 4-aminobutanal. Also functions as a cadaverine transaminase in a a L-lysine degradation pathway to succinate that proceeds via cadaverine, glutarate and L-2-hydroxyglutarate. The protein is Putrescine aminotransferase of Escherichia coli O6:K15:H31 (strain 536 / UPEC).